A 396-amino-acid polypeptide reads, in one-letter code: Phosphoglycerate kinase (396 aa).

Residues 21–23 (DFN), arginine 36, 59–62 (HLGK), arginine 119, and arginine 156 each bind substrate. ATP is bound by residues lysine 206, glutamate 325, and 352-355 (GGDS).

Belongs to the phosphoglycerate kinase family. Monomer.

It localises to the cytoplasm. The enzyme catalyses (2R)-3-phosphoglycerate + ATP = (2R)-3-phospho-glyceroyl phosphate + ADP. The protein operates within carbohydrate degradation; glycolysis; pyruvate from D-glyceraldehyde 3-phosphate: step 2/5. In Macrococcus caseolyticus (strain JCSC5402) (Macrococcoides caseolyticum), this protein is Phosphoglycerate kinase.